A 583-amino-acid chain; its full sequence is Pre-mRNA-processing protein PRP40 (583 aa).

WW domains are found at residues 1–31 and 42–72; these read MSIW…KPKE and ENGW…IPAF. FF domains follow at residues 132–188, 201–257, 262–332, 354–413, 427–488, and 491–552; these read KEEA…YLSN, TSKF…YIDT, QKES…YLKI, RDRI…FVDE, QTLI…KLQN, and RILE…FKPE. Residue T576 is modified to Phosphothreonine.

The protein belongs to the PRPF40 family. As to quaternary structure, interacts with CRM1, MSL5, PRP8, and the RNA polymerase II largest subunit (RPB1). MSL5, MUD2 and PRP40 interact to form the commitment complex 2 (CC2), a precursor of mature spliceosomes.

It localises to the nucleus. In terms of biological role, required for pre-spliceosome formation, which is the first step of pre-mRNA splicing. This protein is associated with snRNP U1. Two commitment complexes, CC1 and CC2, have been defined in yeast. CC1 is a basal complex dependent only on the 5' splice site. CC2 is a complex of lower mobility and is dependent on a branchpoint as well as a 5' splice site region. This protein is involved in CC2 formation where it binds to the branchpoint binding protein MSL5, bridging the U1 snRNP-associated 5' splice site and the MSL5-associated branch point 3' intron splice site. The protein is Pre-mRNA-processing protein PRP40 (PRP40) of Saccharomyces cerevisiae (strain ATCC 204508 / S288c) (Baker's yeast).